Reading from the N-terminus, the 257-residue chain is 3-methyl-2-oxobutanoate hydroxymethyltransferase (257 aa).

The Mg(2+) site is built by Asp42 and Asp86. Residues 42 to 43, Asp86, and Lys116 contribute to the 3-methyl-2-oxobutanoate site; that span reads DS. Glu118 provides a ligand contact to Mg(2+). The active-site Proton acceptor is Glu185.

The protein belongs to the PanB family. As to quaternary structure, homodecamer; pentamer of dimers. It depends on Mg(2+) as a cofactor.

The protein resides in the cytoplasm. The catalysed reaction is 3-methyl-2-oxobutanoate + (6R)-5,10-methylene-5,6,7,8-tetrahydrofolate + H2O = 2-dehydropantoate + (6S)-5,6,7,8-tetrahydrofolate. It functions in the pathway cofactor biosynthesis; (R)-pantothenate biosynthesis; (R)-pantoate from 3-methyl-2-oxobutanoate: step 1/2. Catalyzes the reversible reaction in which hydroxymethyl group from 5,10-methylenetetrahydrofolate is transferred onto alpha-ketoisovalerate to form ketopantoate. The chain is 3-methyl-2-oxobutanoate hydroxymethyltransferase from Prochlorococcus marinus (strain AS9601).